The chain runs to 128 residues: Small ribosomal subunit protein uS11m (128 aa).

The protein belongs to the universal ribosomal protein uS11 family.

It is found in the mitochondrion. In Prototheca wickerhamii, this protein is Small ribosomal subunit protein uS11m (RPS11).